The primary structure comprises 340 residues: Tetraacyldisaccharide 4'-kinase (340 aa).

Position 51–58 (51–58 (HMGGAGKT)) interacts with ATP.

Belongs to the LpxK family.

The enzyme catalyses a lipid A disaccharide + ATP = a lipid IVA + ADP + H(+). It functions in the pathway glycolipid biosynthesis; lipid IV(A) biosynthesis; lipid IV(A) from (3R)-3-hydroxytetradecanoyl-[acyl-carrier-protein] and UDP-N-acetyl-alpha-D-glucosamine: step 6/6. Functionally, transfers the gamma-phosphate of ATP to the 4'-position of a tetraacyldisaccharide 1-phosphate intermediate (termed DS-1-P) to form tetraacyldisaccharide 1,4'-bis-phosphate (lipid IVA). This chain is Tetraacyldisaccharide 4'-kinase, found in Rhodopseudomonas palustris (strain TIE-1).